The primary structure comprises 178 residues: Probable chorismate pyruvate-lyase (178 aa).

Residues Arg73, Leu111, and Glu163 each contribute to the substrate site.

The protein belongs to the UbiC family.

Its subcellular location is the cytoplasm. The catalysed reaction is chorismate = 4-hydroxybenzoate + pyruvate. The protein operates within cofactor biosynthesis; ubiquinone biosynthesis. Its function is as follows. Removes the pyruvyl group from chorismate, with concomitant aromatization of the ring, to provide 4-hydroxybenzoate (4HB) for the ubiquinone pathway. The protein is Probable chorismate pyruvate-lyase of Pseudomonas aeruginosa (strain UCBPP-PA14).